The following is a 418-amino-acid chain: Serine--tRNA ligase (418 aa).

232–234 (TAE) lines the L-serine pocket. Residues 263-265 (RRE) and Val-279 each bind ATP. Glu-286 is a binding site for L-serine. 350-353 (EISS) contacts ATP. Ser-385 provides a ligand contact to L-serine.

Belongs to the class-II aminoacyl-tRNA synthetase family. Type-1 seryl-tRNA synthetase subfamily. In terms of assembly, homodimer. The tRNA molecule binds across the dimer.

It localises to the cytoplasm. The catalysed reaction is tRNA(Ser) + L-serine + ATP = L-seryl-tRNA(Ser) + AMP + diphosphate + H(+). It carries out the reaction tRNA(Sec) + L-serine + ATP = L-seryl-tRNA(Sec) + AMP + diphosphate + H(+). Its pathway is aminoacyl-tRNA biosynthesis; selenocysteinyl-tRNA(Sec) biosynthesis; L-seryl-tRNA(Sec) from L-serine and tRNA(Sec): step 1/1. In terms of biological role, catalyzes the attachment of serine to tRNA(Ser). Is also able to aminoacylate tRNA(Sec) with serine, to form the misacylated tRNA L-seryl-tRNA(Sec), which will be further converted into selenocysteinyl-tRNA(Sec). In Leptospira biflexa serovar Patoc (strain Patoc 1 / Ames), this protein is Serine--tRNA ligase.